A 149-amino-acid polypeptide reads, in one-letter code: Sec-independent protein translocase protein TatB (149 aa).

The chain crosses the membrane as a helical span at residues methionine 1–glycine 22. The segment covering leucine 86–proline 113 has biased composition (polar residues). A disordered region spans residues leucine 86–glycine 149. Positions alanine 114–serine 135 are enriched in low complexity.

This sequence belongs to the TatB family. As to quaternary structure, the Tat system comprises two distinct complexes: a TatABC complex, containing multiple copies of TatA, TatB and TatC subunits, and a separate TatA complex, containing only TatA subunits. Substrates initially bind to the TatABC complex, which probably triggers association of the separate TatA complex to form the active translocon.

It is found in the cell inner membrane. Its function is as follows. Part of the twin-arginine translocation (Tat) system that transports large folded proteins containing a characteristic twin-arginine motif in their signal peptide across membranes. Together with TatC, TatB is part of a receptor directly interacting with Tat signal peptides. TatB may form an oligomeric binding site that transiently accommodates folded Tat precursor proteins before their translocation. This chain is Sec-independent protein translocase protein TatB, found in Shewanella oneidensis (strain ATCC 700550 / JCM 31522 / CIP 106686 / LMG 19005 / NCIMB 14063 / MR-1).